The following is a 209-amino-acid chain: Thymidylate kinase (209 aa).

Position 10-17 (10-17 (GLDGAGKS)) interacts with ATP.

The protein belongs to the thymidylate kinase family.

The catalysed reaction is dTMP + ATP = dTDP + ADP. Its function is as follows. Phosphorylation of dTMP to form dTDP in both de novo and salvage pathways of dTTP synthesis. This Francisella tularensis subsp. novicida (strain U112) protein is Thymidylate kinase.